The sequence spans 437 residues: Enolase (437 aa).

Q162 contributes to the (2R)-2-phosphoglycerate binding site. E204 acts as the Proton donor in catalysis. Positions 251, 297, and 324 each coordinate Mg(2+). (2R)-2-phosphoglycerate-binding residues include K349, R378, S379, and K400. K349 (proton acceptor) is an active-site residue.

This sequence belongs to the enolase family. The cofactor is Mg(2+).

It is found in the cytoplasm. Its subcellular location is the secreted. The protein localises to the cell surface. It carries out the reaction (2R)-2-phosphoglycerate = phosphoenolpyruvate + H2O. The protein operates within carbohydrate degradation; glycolysis; pyruvate from D-glyceraldehyde 3-phosphate: step 4/5. Functionally, catalyzes the reversible conversion of 2-phosphoglycerate (2-PG) into phosphoenolpyruvate (PEP). It is essential for the degradation of carbohydrates via glycolysis. This Chlorobium chlorochromatii (strain CaD3) protein is Enolase.